Consider the following 279-residue polypeptide: Putative colanic acid biosynthesis glycosyl transferase WcaA (279 aa).

The protein to R.meliloti ExoO.

The protein operates within slime biogenesis; slime polysaccharide biosynthesis. The protein is Putative colanic acid biosynthesis glycosyl transferase WcaA (wcaA) of Escherichia coli (strain K12).